We begin with the raw amino-acid sequence, 195 residues long: MMTPQLILASTSVYRQALLRKLGLPFEYCDPNIDETPIANESAQALVLRLAQAKAEAGAKYFPDGLIIGSDQVAVIDSKIIGKPLNRDNAIQQLSQASGKTITFYTGLALYNAQTGEINAQVEPFTVHFRHLAASQISAYVDKEQPFYCAGSFKSEGLGIALFSRLEGRDPNTLVGLPLILLTEMLLSQGIDVLA.

Aspartate 71 serves as the catalytic Proton acceptor.

The protein belongs to the Maf family. YceF subfamily. A divalent metal cation is required as a cofactor.

It localises to the cytoplasm. It carries out the reaction N(7)-methyl-GTP + H2O = N(7)-methyl-GMP + diphosphate + H(+). Functionally, nucleoside triphosphate pyrophosphatase that hydrolyzes 7-methyl-GTP (m(7)GTP). May have a dual role in cell division arrest and in preventing the incorporation of modified nucleotides into cellular nucleic acids. This chain is 7-methyl-GTP pyrophosphatase, found in Shewanella oneidensis (strain ATCC 700550 / JCM 31522 / CIP 106686 / LMG 19005 / NCIMB 14063 / MR-1).